The sequence spans 722 residues: Exocyst complex component 3-like protein 4 (722 aa).

Disordered stretches follow at residues 1–53 and 92–131; these read MPSP…LGSL and NDGP…KPEA. Residues 34–46 show a composition bias toward basic and acidic residues; that stretch reads SRKEPNAHRKDGT. Phosphoserine is present on Ser-52. Over residues 113–122 the composition is skewed to polar residues; it reads GVSQQASTGA. Residue Ser-513 is modified to Phosphoserine.

This sequence belongs to the SEC6 family.

The protein is Exocyst complex component 3-like protein 4 (EXOC3L4) of Homo sapiens (Human).